The primary structure comprises 95 residues: Small ribosomal subunit protein bS6 (95 aa).

Belongs to the bacterial ribosomal protein bS6 family.

Its function is as follows. Binds together with bS18 to 16S ribosomal RNA. This is Small ribosomal subunit protein bS6 from Corynebacterium kroppenstedtii (strain DSM 44385 / JCM 11950 / CIP 105744 / CCUG 35717).